Here is a 247-residue protein sequence, read N- to C-terminus: Ribosomal RNA small subunit methyltransferase J (247 aa).

S-adenosyl-L-methionine is bound by residues 106–107 (RD), 122–123 (ER), and D168.

The protein belongs to the methyltransferase superfamily. RsmJ family.

The protein localises to the cytoplasm. It catalyses the reaction guanosine(1516) in 16S rRNA + S-adenosyl-L-methionine = N(2)-methylguanosine(1516) in 16S rRNA + S-adenosyl-L-homocysteine + H(+). Functionally, specifically methylates the guanosine in position 1516 of 16S rRNA. This is Ribosomal RNA small subunit methyltransferase J from Alcanivorax borkumensis (strain ATCC 700651 / DSM 11573 / NCIMB 13689 / SK2).